The sequence spans 421 residues: Glucan 1,3-beta-glucosidase (421 aa).

An N-terminal signal peptide occupies residues 1–15 (MKLTKLVALAGAALA). Catalysis depends on Glu213, which acts as the Proton donor. 2 disulfides stabilise this stretch: Cys296–Cys419 and Cys321–Cys347. Glu313 functions as the Nucleophile in the catalytic mechanism.

This sequence belongs to the glycosyl hydrolase 5 (cellulase A) family.

Its subcellular location is the secreted. It catalyses the reaction Successive hydrolysis of beta-D-glucose units from the non-reducing ends of (1-&gt;3)-beta-D-glucans, releasing alpha-glucose.. The protein is Glucan 1,3-beta-glucosidase (EXG1) of Yarrowia lipolytica (strain CLIB 122 / E 150) (Yeast).